The chain runs to 343 residues: 3-oxopimeloyl-[acyl-carrier-protein] synthase (343 aa).

Active-site residues include Cys-132 and His-272. The ACP-binding stretch occupies residues 273-277 (QANHR). Asn-302 is a catalytic residue.

The protein belongs to the thiolase-like superfamily. BioZ family.

The enzyme catalyses malonyl-[ACP] + an acyl-CoA + H(+) = a 3-oxoacyl-[ACP] + CO2 + CoA. The catalysed reaction is glutaryl-CoA + malonyl-[ACP] + H(+) = 3-oxo-6-carboxyhexanoyl-[ACP] + CO2 + CoA. The protein operates within cofactor biosynthesis; biotin biosynthesis. Involved in the formation of the biotin precursor pimeloyl-ACP. Catalyzes the condensation of glutaryl-CoA, an intermediate in lysine degradation, with malonyl-ACP to produce 3-oxopimeloyl-ACP. The protein is 3-oxopimeloyl-[acyl-carrier-protein] synthase of Rhodothermus marinus (strain ATCC 43812 / DSM 4252 / R-10) (Rhodothermus obamensis).